The primary structure comprises 506 residues: MTEVENTRPELPENVRVRFCPSPTGIPHVGMVRTALFNWAEARHTKGTFVFRIEDTDAQRDSEESYNQIIEALNWLGIDWDEGINVGGPDGPYRQSERGDIYKDVAAKLLEAGYAYESFSTPEEIEARNVAAGRPKAFGYDGYDRNLTEEQKAAFRAEGRKPALRIRMPDEDVAFDDLIRGRIEFKAGSVPDYVIVRPNGDPLYTLTNPVDDAMMRINVVLRGEDLLSSTPRQIVLYRYLIELGVAKEMPLFGHMPYVMGQGNKKLSKRDPESNLFLHRDNGFIREGLLNYLALLGWSIAPDRDVFSMDEMIEKFDVRDVKANPARFDVDKAISINAEHIRMLEPQDFLNRSVPYLHRDGVVSADSWDALTDREREVLTAAAPLVQPRVRLLGEVAGMVGSLLSTEGYIEPDADAKKQLKDSAPAVLDAAIAALDAVAEGDWKTDSLHETLNKALVEDGGYKPRLAFGPVRVAMSGRRVSPPLFESMEIVGKDVAMARLKGLREHL.

Positions 21-31 match the 'HIGH' region motif; it reads PSPTGIPHVGM. Positions 265 to 269 match the 'KMSKS' region motif; the sequence is KLSKR. Position 268 (Lys268) interacts with ATP.

Belongs to the class-I aminoacyl-tRNA synthetase family. Glutamate--tRNA ligase type 1 subfamily. In terms of assembly, monomer.

Its subcellular location is the cytoplasm. The catalysed reaction is tRNA(Glu) + L-glutamate + ATP = L-glutamyl-tRNA(Glu) + AMP + diphosphate. Functionally, catalyzes the attachment of glutamate to tRNA(Glu) in a two-step reaction: glutamate is first activated by ATP to form Glu-AMP and then transferred to the acceptor end of tRNA(Glu). The protein is Glutamate--tRNA ligase of Bifidobacterium adolescentis (strain ATCC 15703 / DSM 20083 / NCTC 11814 / E194a).